A 470-amino-acid chain; its full sequence is BTB/POZ domain-containing protein 17 (470 aa).

A signal peptide spans M1–S18. Positions S53–L122 constitute a BTB domain. A BACK domain is found at V161–Q261.

It is found in the secreted. This is BTB/POZ domain-containing protein 17 (btbd17) from Xenopus laevis (African clawed frog).